The following is a 254-amino-acid chain: Type III pantothenate kinase (254 aa).

13 to 20 (MIGNTRQH) contributes to the ATP binding site. Substrate-binding positions include tyrosine 84 and 88 to 91 (GLDR). The active-site Proton acceptor is aspartate 90. Aspartate 110 contributes to the K(+) binding site. An ATP-binding site is contributed by threonine 113. Threonine 166 contacts substrate.

It belongs to the type III pantothenate kinase family. As to quaternary structure, homodimer. NH4(+) serves as cofactor. It depends on K(+) as a cofactor.

The protein localises to the cytoplasm. The catalysed reaction is (R)-pantothenate + ATP = (R)-4'-phosphopantothenate + ADP + H(+). It participates in cofactor biosynthesis; coenzyme A biosynthesis; CoA from (R)-pantothenate: step 1/5. Functionally, catalyzes the phosphorylation of pantothenate (Pan), the first step in CoA biosynthesis. The polypeptide is Type III pantothenate kinase (Thermosynechococcus vestitus (strain NIES-2133 / IAM M-273 / BP-1)).